Consider the following 203-residue polypeptide: Na(+)-translocating NADH-quinone reductase subunit E (203 aa).

The next 6 helical transmembrane spans lie at 12–32, 36–56, 82–102, 115–135, 145–165, and 181–201; these read AVFV…FLAL, MEAA…TVPV, FLGL…LEMV, GVFL…LFMV, LVYG…LAGI, and LGIT…FSGI.

It belongs to the NqrDE/RnfAE family. Composed of six subunits; NqrA, NqrB, NqrC, NqrD, NqrE and NqrF.

The protein localises to the cell inner membrane. It catalyses the reaction a ubiquinone + n Na(+)(in) + NADH + H(+) = a ubiquinol + n Na(+)(out) + NAD(+). In terms of biological role, NQR complex catalyzes the reduction of ubiquinone-1 to ubiquinol by two successive reactions, coupled with the transport of Na(+) ions from the cytoplasm to the periplasm. NqrA to NqrE are probably involved in the second step, the conversion of ubisemiquinone to ubiquinol. This chain is Na(+)-translocating NADH-quinone reductase subunit E, found in Hahella chejuensis (strain KCTC 2396).